The sequence spans 128 residues: Small ribosomal subunit protein bS6 (128 aa).

This sequence belongs to the bacterial ribosomal protein bS6 family.

Functionally, binds together with bS18 to 16S ribosomal RNA. The polypeptide is Small ribosomal subunit protein bS6 (Leifsonia xyli subsp. xyli (strain CTCB07)).